The chain runs to 234 residues: tRNA1(Val) (adenine(37)-N6)-methyltransferase (234 aa).

The protein belongs to the methyltransferase superfamily. tRNA (adenine-N(6)-)-methyltransferase family.

The protein resides in the cytoplasm. It catalyses the reaction adenosine(37) in tRNA1(Val) + S-adenosyl-L-methionine = N(6)-methyladenosine(37) in tRNA1(Val) + S-adenosyl-L-homocysteine + H(+). Its function is as follows. Specifically methylates the adenine in position 37 of tRNA(1)(Val) (anticodon cmo5UAC). This chain is tRNA1(Val) (adenine(37)-N6)-methyltransferase, found in Aliivibrio salmonicida (strain LFI1238) (Vibrio salmonicida (strain LFI1238)).